The following is a 161-amino-acid chain: S-ribosylhomocysteine lyase (161 aa).

Histidine 58, histidine 62, and cysteine 128 together coordinate Fe cation.

Belongs to the LuxS family. As to quaternary structure, homodimer. Fe cation is required as a cofactor.

The enzyme catalyses S-(5-deoxy-D-ribos-5-yl)-L-homocysteine = (S)-4,5-dihydroxypentane-2,3-dione + L-homocysteine. Its function is as follows. Involved in the synthesis of autoinducer 2 (AI-2) which is secreted by bacteria and is used to communicate both the cell density and the metabolic potential of the environment. The regulation of gene expression in response to changes in cell density is called quorum sensing. Catalyzes the transformation of S-ribosylhomocysteine (RHC) to homocysteine (HC) and 4,5-dihydroxy-2,3-pentadione (DPD). The sequence is that of S-ribosylhomocysteine lyase from Bifidobacterium adolescentis (strain ATCC 15703 / DSM 20083 / NCTC 11814 / E194a).